The sequence spans 205 residues: Transcriptional regulator GfcR (205 aa).

Belongs to the purine/pyrimidine phosphoribosyltransferase family. GfcR subfamily.

In Methanococcus maripaludis (strain DSM 14266 / JCM 13030 / NBRC 101832 / S2 / LL), this protein is Transcriptional regulator GfcR.